The following is an 893-amino-acid chain: Alanine--tRNA ligase (893 aa).

Belongs to the class-II aminoacyl-tRNA synthetase family.

The protein localises to the cytoplasm. The catalysed reaction is tRNA(Ala) + L-alanine + ATP = L-alanyl-tRNA(Ala) + AMP + diphosphate. Its function is as follows. Catalyzes the attachment of alanine to tRNA(Ala) in a two-step reaction: alanine is first activated by ATP to form Ala-AMP and then transferred to the acceptor end of tRNA(Ala). Also edits incorrectly charged Ser-tRNA(Ala) and Gly-tRNA(Ala) via its editing domain. The chain is Alanine--tRNA ligase (alaS) from Leuconostoc mesenteroides subsp. mesenteroides (strain ATCC 8293 / DSM 20343 / BCRC 11652 / CCM 1803 / JCM 6124 / NCDO 523 / NBRC 100496 / NCIMB 8023 / NCTC 12954 / NRRL B-1118 / 37Y).